Here is a 211-residue protein sequence, read N- to C-terminus: Fucoxanthin-chlorophyll a-c binding protein F, chloroplastic (211 aa).

A chloroplast-targeting transit peptide spans 1–33 (AIACAAAPGLRGPSAFNGAALSTPAKSSSAMKM). 3 helical membrane passes run 75–95 (IAMLAIAGHLTQQNTRLPGML), 116–136 (IPPGGLAQIFGFIGFLELAVM), and 177–197 (GRAAQMGILGMMVHEELSNQP).

It belongs to the fucoxanthin chlorophyll protein family. In terms of assembly, the LHC complex of chromophytic algae is composed of fucoxanthin, chlorophyll A and C bound non-covalently by fucoxanthin chlorophyll proteins (FCPs). The ratio of pigments in this LHC is; fucoxanthin: chlorophyll C: chlorophyll A; (0.6-1): (0.1-0.3): (1).

The protein localises to the plastid. Its subcellular location is the chloroplast thylakoid membrane. Its function is as follows. The light-harvesting complex (LHC) functions as a light receptor, it captures and delivers excitation energy to photosystems with which it is closely associated. Energy is transferred from the carotenoid and chlorophyll C (or B) to chlorophyll A and the photosynthetic reaction centers where it is used to synthesize ATP and reducing power. The sequence is that of Fucoxanthin-chlorophyll a-c binding protein F, chloroplastic (FCPF) from Macrocystis pyrifera (Giant kelp).